A 437-amino-acid chain; its full sequence is MSSNDQINRTRALELALANIDRQYGKGAVMRMNDAQKAYIDVIPTGSIALDYALGVGGLPRGRIVEIYGPESSGKTTLTLHAIASVQRAGGIAAFIDAEHALDPEYAKKLGVDIDALLVSQPDSGEQALEISDMLIRSTAIDLIVIDSVAALVPRAELEGDMGDMHVGLQARLMSQALRKITSGLNQTGTTAIFINQLREKVGVFFGSPETTPGGRALKFYASVRLDIRRVETIKQGTEAVGNRTRVKVVKNKVAPPFKQAEFDVLYGVGISRESGLIDFAVDRGIIKKSGSWYVYGDDQLGQGKENARRFLLENKSVADEIENKIISLLGFRSNEFGDLPDHDAAVRTSPDTNSRKVSGTGAVHTTSGSPSAGKGTASGAVNNSRDSTGGDTPAGQGPLNLSVNRDVSTDTVSSKISDATHNQKPAGNGKSVKRKG.

69–76 (GPESSGKT) is an ATP binding site. The interval 343 to 437 (HDAAVRTSPD…GNGKSVKRKG (95 aa)) is disordered. Polar residues-rich tracts occupy residues 350 to 371 (SPDTNSRKVSGTGAVHTTSGSP), 380 to 391 (GAVNNSRDSTGG), and 400 to 426 (LNLSVNRDVSTDTVSSKISDATHNQKP).

It belongs to the RecA family.

It localises to the cytoplasm. Its function is as follows. Can catalyze the hydrolysis of ATP in the presence of single-stranded DNA, the ATP-dependent uptake of single-stranded DNA by duplex DNA, and the ATP-dependent hybridization of homologous single-stranded DNAs. It interacts with LexA causing its activation and leading to its autocatalytic cleavage. The sequence is that of Protein RecA from Tropheryma whipplei (strain Twist) (Whipple's bacillus).